Consider the following 311-residue polypeptide: Probable dihydroorotate dehydrogenase A (fumarate) (311 aa).

Residues Lys45, 69–73, and Asn128 contribute to the substrate site; that span reads NSMGL. 45–46 contacts FMN; the sequence is KT. FMN is bound at residue Asn128. The Nucleophile role is filled by Cys131. The FMN site is built by Lys165 and Val193. 194-195 provides a ligand contact to substrate; it reads NS. FMN is bound by residues Gly220, 248–249, and 270–271; these read GG and GT.

This sequence belongs to the dihydroorotate dehydrogenase family. Type 1 subfamily. As to quaternary structure, homodimer. Requires FMN as cofactor.

It is found in the cytoplasm. It catalyses the reaction (S)-dihydroorotate + fumarate = orotate + succinate. It participates in pyrimidine metabolism; UMP biosynthesis via de novo pathway. Its function is as follows. Catalyzes the conversion of dihydroorotate to orotate with fumarate as the electron acceptor. This Streptococcus pneumoniae (strain ATCC BAA-255 / R6) protein is Probable dihydroorotate dehydrogenase A (fumarate) (pyrDA).